The sequence spans 405 residues: L-rhamnonate dehydratase (405 aa).

Substrate is bound by residues His-33 and Arg-59. Positions 226, 252, and 280 each coordinate Mg(2+). The active-site Proton acceptor is His-329. Glu-349 is a substrate binding site.

It belongs to the mandelate racemase/muconate lactonizing enzyme family. RhamD subfamily. In terms of assembly, homooctamer; tetramer of dimers. It depends on Mg(2+) as a cofactor.

It carries out the reaction L-rhamnonate = 2-dehydro-3-deoxy-L-rhamnonate + H2O. In terms of biological role, catalyzes the dehydration of L-rhamnonate to 2-keto-3-deoxy-L-rhamnonate (KDR). The polypeptide is L-rhamnonate dehydratase (Shigella boydii serotype 4 (strain Sb227)).